A 466-amino-acid chain; its full sequence is MLRNIPRSLRKDGGKRIPGLISRVANQFSTTSSLLNKKSIPDAPEDSHTGQYINTITKPFTVTTYARPNVVMTHGKGSYLYDLENRQYLDFSAGIAVTCLGHSHSKITEIISDQAATLMHCSNLYHNLYAGELANKLVTNTINSGGMKEAQRVFLCNSGTEANEAALKFARKYGKSFSDDKYEMITFKNSFHGRTMGALSVTPNEKYQKPFAPLVPGVKIAEPNDISSVEKLISKEKTCAVIIEPIQGEGGVNAIDAEFLVSLKKLCVDNEVVLIYDEIQCGLGRSGKLWAHCNLPEEAHPDILTMAKALGNGFPIGAVMVSDKIEKVLKVGDHGTTYGGNPLGSKIGSYVVDQVSDKEFLLEVEEKSEKFTKGLSKIANKHPDHIGEVKGKGLLLGLQLKGNLDVGDVVAKCRENGLLVISAGMNVLRIVPALNIPNEAIEEGLDVLDKCIDELSKDPKSSFSQS.

Lysine 308 carries the post-translational modification N6-(pyridoxal phosphate)lysine.

It belongs to the class-III pyridoxal-phosphate-dependent aminotransferase family. It depends on pyridoxal 5'-phosphate as a cofactor.

Its subcellular location is the mitochondrion matrix. It catalyses the reaction N(2)-acetyl-L-ornithine + 2-oxoglutarate = N-acetyl-L-glutamate 5-semialdehyde + L-glutamate. It functions in the pathway amino-acid biosynthesis; L-arginine biosynthesis; N(2)-acetyl-L-ornithine from L-glutamate: step 4/4. This is Acetylornithine aminotransferase, mitochondrial (ARG8) from Debaryomyces hansenii (strain ATCC 36239 / CBS 767 / BCRC 21394 / JCM 1990 / NBRC 0083 / IGC 2968) (Yeast).